Here is a 212-residue protein sequence, read N- to C-terminus: Nitric oxide synthase (212 aa).

Residue Y11 coordinates heme b. Residues 30 to 50 (KKRAIGFKKLAKAVKFSTKLM) form a calmodulin-binding region. The region spanning 60 to 212 (ATILYATETG…AVDTLLEELG (153 aa)) is the Flavodoxin-like domain. The tract at residues 155 to 175 (SYSDSRKSSSDEPEHKDNFES) is disordered. The span at 158–173 (DSRKSSSDEPEHKDNF) shows a compositional bias: basic and acidic residues. 186 to 212 (AFGLGSRAYPHFCAFARAVDTLLEELG) is an FMN binding site.

It belongs to the NOS family. Heme b serves as cofactor. FAD is required as a cofactor. Requires FMN as cofactor.

The catalysed reaction is 2 L-arginine + 3 NADPH + 4 O2 + H(+) = 2 L-citrulline + 2 nitric oxide + 3 NADP(+) + 4 H2O. In terms of biological role, produces nitric oxide (NO) which is a messenger molecule with diverse functions throughout the body. This chain is Nitric oxide synthase, found in Squalus acanthias (Spiny dogfish).